Consider the following 328-residue polypeptide: Endochitinase (328 aa).

The signal sequence occupies residues 1–27 (MKKNRMMMMIWSVGVVWMLLLVGGSYG). One can recognise a Chitin-binding type-1 domain in the interval 28–68 (EQCGRQAGGALCPGGNCCSQFGWCGSTTDYCGPGCQSQCGG). 7 disulfide bridges follow: Cys30–Cys45, Cys39–Cys51, Cys44–Cys58, Cys62–Cys66, Cys97–Cys159, Cys170–Cys178, and Cys277–Cys309. The active-site Proton donor is the Glu141. The propeptide at 318–328 (SLLLSDLVTSQ) is removed in mature form.

The protein belongs to the glycosyl hydrolase 19 family. Chitinase class I subfamily.

The protein localises to the vacuole. The catalysed reaction is Random endo-hydrolysis of N-acetyl-beta-D-glucosaminide (1-&gt;4)-beta-linkages in chitin and chitodextrins.. Defense against chitin-containing fungal pathogens. In Phaseolus vulgaris (Kidney bean), this protein is Endochitinase.